The following is a 330-amino-acid chain: Tryptophan--tRNA ligase (330 aa).

Residues 10–12 and 18–19 contribute to the ATP site; these read QPS and GN. A 'HIGH' region motif is present at residues 11–19; the sequence is PSGSVTLGN. Asp-133 contacts L-tryptophan. ATP-binding positions include 145–147, Ile-184, and 193–197; these read GED and KMSKS. The 'KMSKS' region motif lies at 193–197; the sequence is KMSKS.

This sequence belongs to the class-I aminoacyl-tRNA synthetase family. Homodimer.

The protein localises to the cytoplasm. It catalyses the reaction tRNA(Trp) + L-tryptophan + ATP = L-tryptophyl-tRNA(Trp) + AMP + diphosphate + H(+). Its function is as follows. Catalyzes the attachment of tryptophan to tRNA(Trp). This chain is Tryptophan--tRNA ligase, found in Bacillus subtilis (strain 168).